We begin with the raw amino-acid sequence, 616 residues long: Centrosomal protein of 70 kDa (616 aa).

Coiled-coil stretches lie at residues 96 to 210 (EETT…EEER) and 273 to 335 (NYKG…NIKL). The TPR repeat unit spans residues 502 to 535 (NGVFPRMNEVYTRLGEMNNAVRNLQELLELDSSS).

In terms of assembly, directly interacts with tubulin-gamma; this interaction determines centrosomal localization.

It is found in the cytoplasm. The protein resides in the cytoskeleton. It localises to the microtubule organizing center. Its subcellular location is the centrosome. Functionally, plays a role in the organization of both preexisting and nascent microtubules in interphase cells. During mitosis, required for the organization and orientation of the mitotic spindle. The polypeptide is Centrosomal protein of 70 kDa (Cep70) (Mus musculus (Mouse)).